The sequence spans 315 residues: Ankyrin repeat domain-containing protein 54 (315 aa).

The interval methionine 1–alanine 49 is disordered. ANK repeat units lie at residues histidine 124 to alanine 153, lysine 157 to glutamine 186, leucine 190 to alanine 219, and alanine 223 to glutamine 255.

It is found in the nucleus. Its subcellular location is the cytoplasm. It localises to the midbody. Its function is as follows. Plays an important role in regulating intracellular signaling events associated with erythroid terminal differentiation. This is Ankyrin repeat domain-containing protein 54 (ankrd54) from Danio rerio (Zebrafish).